We begin with the raw amino-acid sequence, 105 residues long: MRPEPPHHENAELAAMNLEMLESQPVPEIDTLREEIDRLDAEILALVKRRAEVSKAIGKARMASGGTRLVHSREMKVIERYSELGPDGKDLAILLLRLGRGRLGH.

The 83-residue stretch at 23–105 (SQPVPEIDTL…LRLGRGRLGH (83 aa)) folds into the Chorismate mutase domain. Residues Arg-61, Val-70, and Glu-74 each contribute to the chorismate site.

Homodimer. Interacts with AroG.

It is found in the cytoplasm. The catalysed reaction is chorismate = prephenate. Its pathway is metabolic intermediate biosynthesis; prephenate biosynthesis; prephenate from chorismate: step 1/1. The formation of the complex with AroG activates the chorismate mutase activity. Functionally, catalyzes the Claisen rearrangement of chorismate to prephenate. Probably involved in the aromatic amino acid biosynthesis. The sequence is that of Intracellular chorismate mutase from Mycobacterium bovis (strain ATCC BAA-935 / AF2122/97).